The primary structure comprises 59 residues: Photosystem II reaction center protein K (59 aa).

A propeptide spanning residues 1–22 (MILYSHLSTLIDIDLSNNIFLA) is cleaved from the precursor. The chain crosses the membrane as a helical span at residues 30-50 (IFDPLVDVMPVIPVFFLLLAF).

The protein belongs to the PsbK family. PSII is composed of 1 copy each of membrane proteins PsbA, PsbB, PsbC, PsbD, PsbE, PsbF, PsbH, PsbI, PsbJ, PsbK, PsbL, PsbM, PsbT, PsbX, PsbY, PsbZ, Psb30/Ycf12, at least 3 peripheral proteins of the oxygen-evolving complex and a large number of cofactors. It forms dimeric complexes.

Its subcellular location is the plastid. The protein localises to the chloroplast thylakoid membrane. Functionally, one of the components of the core complex of photosystem II (PSII). PSII is a light-driven water:plastoquinone oxidoreductase that uses light energy to abstract electrons from H(2)O, generating O(2) and a proton gradient subsequently used for ATP formation. It consists of a core antenna complex that captures photons, and an electron transfer chain that converts photonic excitation into a charge separation. The protein is Photosystem II reaction center protein K of Chara vulgaris (Common stonewort).